The sequence spans 676 residues: Cysteine-rich receptor-like protein kinase 4 (676 aa).

Positions 1-16 are cleaved as a signal peptide; that stretch reads MSFFWLFPFLLHLSFA. Residues 17–287 lie on the Extracellular side of the membrane; the sequence is DSLSPLSAPV…ISERGKGRNS (271 aa). 2 Gnk2-homologous domains span residues 31–135 and 146–246; these read HLNH…HRNI and ILLN…NYSF. Asn-33, Asn-46, Asn-64, Asn-152, Asn-181, Asn-243, and Asn-248 each carry an N-linked (GlcNAc...) asparagine glycan. The tract at residues 252–279 is disordered; that stretch reads TRSSSPPSLPPRSTPQQQLKLAPPPLIS. Asn-286 carries N-linked (GlcNAc...) asparagine glycosylation. Residues 288 to 308 form a helical membrane-spanning segment; the sequence is SVIIVVVVPIIALLLLFVAFF. The Cytoplasmic portion of the chain corresponds to 309 to 676; it reads SLRAKKTRTN…DASITNVTPR (368 aa). Residues 351–631 form the Protein kinase domain; that stretch reads FCETNKLGQG…QMLTTSSIAL (281 aa). ATP is bound by residues 357–365 and Lys-379; that span reads LGQGGFGEV. Phosphotyrosine is present on Tyr-424. Asp-476 functions as the Proton acceptor in the catalytic mechanism. Position 516 is a phosphothreonine (Thr-516). Residue Tyr-524 is modified to Phosphotyrosine.

It belongs to the protein kinase superfamily. Ser/Thr protein kinase family. CRK subfamily.

The protein localises to the membrane. It catalyses the reaction L-seryl-[protein] + ATP = O-phospho-L-seryl-[protein] + ADP + H(+). The catalysed reaction is L-threonyl-[protein] + ATP = O-phospho-L-threonyl-[protein] + ADP + H(+). In Arabidopsis thaliana (Mouse-ear cress), this protein is Cysteine-rich receptor-like protein kinase 4 (CRK4).